We begin with the raw amino-acid sequence, 237 residues long: NAD-dependent protein deacetylase (237 aa).

Positions M1 to K237 constitute a Deacetylase sirtuin-type domain. A18, T22, F29, R30, Q95, D98, and H113 together coordinate NAD(+). F29 serves as a coordination point for nicotinamide. Residue D98 coordinates nicotinamide. H113 serves as the catalytic Proton acceptor. C121, C124, C140, and C142 together coordinate Zn(2+). NAD(+) is bound by residues S180, S181, N205, and I224.

It belongs to the sirtuin family. Class U subfamily. It depends on Zn(2+) as a cofactor.

The protein localises to the cytoplasm. The catalysed reaction is N(6)-acetyl-L-lysyl-[protein] + NAD(+) + H2O = 2''-O-acetyl-ADP-D-ribose + nicotinamide + L-lysyl-[protein]. Its function is as follows. NAD-dependent protein deacetylase which modulates the activities of several enzymes which are inactive in their acetylated form. The protein is NAD-dependent protein deacetylase of Shouchella clausii (strain KSM-K16) (Alkalihalobacillus clausii).